The following is a 123-amino-acid chain: MADNNKMSREEAGRKGGETTSKNHDKEFYQEIGQKGGEATSKNHDKEFYQEIGEKGGEATSKNHDKEFYQEIGEKGGEATSENHDKEFYQEIGRKGGEATSKNHDKEFYQEIGSKGGNARNND.

Composition is skewed to basic and acidic residues over residues 1–29 (MADN…KEFY) and 41–109 (SKNH…KEFY). Residues 1–123 (MADNNKMSRE…SKGGNARNND (123 aa)) are disordered. 5 consecutive repeat copies span residues 13 to 32 (GRKG…YQEI), 33 to 52 (GQKG…YQEI), 53 to 72 (GEKG…YQEI), 73 to 92 (GEKG…YQEI), and 93 to 112 (GRKG…YQEI). Residues 13–120 (GRKGGETTSK…EIGSKGGNAR (108 aa)) are 5 X 20 AA approximate tandem repeats.

In terms of biological role, involved in an adaptive response to nutrient deprivation other than sporulation. In Bacillus subtilis (strain 168), this protein is Glucose starvation-inducible protein B (gsiB).